The following is a 132-amino-acid chain: Translation initiation factor 5A (132 aa).

Lys36 carries the post-translational modification Hypusine.

The protein belongs to the eIF-5A family.

The protein resides in the cytoplasm. Its function is as follows. Functions by promoting the formation of the first peptide bond. The chain is Translation initiation factor 5A (eIF5A) from Pyrobaculum islandicum (strain DSM 4184 / JCM 9189 / GEO3).